A 201-amino-acid polypeptide reads, in one-letter code: Sorting nexin-10 (201 aa).

The segment at 8 to 125 is required for interaction with ATP6V1D; sequence EEFVSVWVRD…SLHLFLQSHL (118 aa). Residues 10–127 form the PX domain; sequence FVSVWVRDPR…HLFLQSHLNS (118 aa). Residues arginine 53, lysine 79, and arginine 94 each contribute to the a 1,2-diacyl-sn-glycero-3-phospho-(1D-myo-inositol-3-phosphate) site. Residues 155–201 form a disordered region; sequence RFPEEEEEGKKDADVEYDSESSSSGLGHSSDDSSSHGCKTSPALQES.

This sequence belongs to the sorting nexin family. As to quaternary structure, interacts with ATP6V1D; may play a role in ciliogenesis. In terms of tissue distribution, expressed in femur, calvariae and teeth.

The protein resides in the cytoplasm. It localises to the endosome membrane. The protein localises to the cytoskeleton. It is found in the microtubule organizing center. Its subcellular location is the centrosome. Functionally, probable phosphoinositide-binding protein involved in protein sorting and membrane trafficking in endosomes. Plays a role in cilium biogenesis through regulation of the transport and the localization of proteins to the cilium. Required for the localization to the cilium of V-ATPase subunit ATP6V1D and ATP6V0D1, and RAB8A. Involved in osteoclast differentiation and therefore bone resorption. This Mus musculus (Mouse) protein is Sorting nexin-10 (Snx10).